A 484-amino-acid polypeptide reads, in one-letter code: ATP synthase subunit beta (484 aa).

Residue 162 to 169 coordinates ATP; sequence GGAGVGKT.

Belongs to the ATPase alpha/beta chains family. As to quaternary structure, F-type ATPases have 2 components, CF(1) - the catalytic core - and CF(0) - the membrane proton channel. CF(1) has five subunits: alpha(3), beta(3), gamma(1), delta(1), epsilon(1). CF(0) has four main subunits: a(1), b(1), b'(1) and c(9-12).

It is found in the cellular thylakoid membrane. The catalysed reaction is ATP + H2O + 4 H(+)(in) = ADP + phosphate + 5 H(+)(out). Functionally, produces ATP from ADP in the presence of a proton gradient across the membrane. The catalytic sites are hosted primarily by the beta subunits. The polypeptide is ATP synthase subunit beta (Synechococcus elongatus (strain ATCC 33912 / PCC 7942 / FACHB-805) (Anacystis nidulans R2)).